Consider the following 411-residue polypeptide: Peptidase T (411 aa).

H79 is a Zn(2+) binding site. D81 is an active-site residue. Zn(2+) is bound at residue D142. Catalysis depends on E176, which acts as the Proton acceptor. Zn(2+) is bound by residues E177, D199, and H381.

It belongs to the peptidase M20B family. Requires Zn(2+) as cofactor.

The protein localises to the cytoplasm. It carries out the reaction Release of the N-terminal residue from a tripeptide.. Its function is as follows. Cleaves the N-terminal amino acid of tripeptides. This is Peptidase T from Exiguobacterium sibiricum (strain DSM 17290 / CCUG 55495 / CIP 109462 / JCM 13490 / 255-15).